A 509-amino-acid polypeptide reads, in one-letter code: UDP-N-acetylmuramoyl-L-alanyl-D-glutamate--2,6-diaminopimelate ligase (509 aa).

Ser-32 contributes to the UDP-N-acetyl-alpha-D-muramoyl-L-alanyl-D-glutamate binding site. 117–123 (GTNGKTT) lines the ATP pocket. UDP-N-acetyl-alpha-D-muramoyl-L-alanyl-D-glutamate contacts are provided by residues 159–160 (TT), Ser-186, Gln-192, and Arg-194. The residue at position 226 (Lys-226) is an N6-carboxylysine. Meso-2,6-diaminopimelate is bound by residues Arg-401, 425–428 (DNPR), Gly-476, and Glu-480. Positions 425–428 (DNPR) match the Meso-diaminopimelate recognition motif motif.

The protein belongs to the MurCDEF family. MurE subfamily. Mg(2+) serves as cofactor. Post-translationally, carboxylation is probably crucial for Mg(2+) binding and, consequently, for the gamma-phosphate positioning of ATP.

The protein localises to the cytoplasm. It carries out the reaction UDP-N-acetyl-alpha-D-muramoyl-L-alanyl-D-glutamate + meso-2,6-diaminopimelate + ATP = UDP-N-acetyl-alpha-D-muramoyl-L-alanyl-gamma-D-glutamyl-meso-2,6-diaminopimelate + ADP + phosphate + H(+). The protein operates within cell wall biogenesis; peptidoglycan biosynthesis. Functionally, catalyzes the addition of meso-diaminopimelic acid to the nucleotide precursor UDP-N-acetylmuramoyl-L-alanyl-D-glutamate (UMAG) in the biosynthesis of bacterial cell-wall peptidoglycan. The chain is UDP-N-acetylmuramoyl-L-alanyl-D-glutamate--2,6-diaminopimelate ligase from Prochlorococcus marinus (strain NATL1A).